A 311-amino-acid polypeptide reads, in one-letter code: Ribosomal RNA small subunit methyltransferase H (311 aa).

Residues 34–36, Asp54, Phe78, Asp100, and Gln107 each bind S-adenosyl-L-methionine; that span reads GGH.

Belongs to the methyltransferase superfamily. RsmH family.

The protein localises to the cytoplasm. The catalysed reaction is cytidine(1402) in 16S rRNA + S-adenosyl-L-methionine = N(4)-methylcytidine(1402) in 16S rRNA + S-adenosyl-L-homocysteine + H(+). In terms of biological role, specifically methylates the N4 position of cytidine in position 1402 (C1402) of 16S rRNA. This Hamiltonella defensa subsp. Acyrthosiphon pisum (strain 5AT) protein is Ribosomal RNA small subunit methyltransferase H.